A 107-amino-acid polypeptide reads, in one-letter code: Hydrogenase expression/formation protein HoxL (107 aa).

The protein belongs to the HupF/HypC family.

The protein is Hydrogenase expression/formation protein HoxL (hoxL) of Cupriavidus necator (strain ATCC 17699 / DSM 428 / KCTC 22496 / NCIMB 10442 / H16 / Stanier 337) (Ralstonia eutropha).